The following is a 602-amino-acid chain: Elongation factor 4 (602 aa).

In terms of domain architecture, tr-type G spans 2–184 (KHIRNFSIIA…AIVAKVPAPR (183 aa)). GTP is bound by residues 14–19 (DHGKST) and 131–134 (NKMD).

The protein belongs to the TRAFAC class translation factor GTPase superfamily. Classic translation factor GTPase family. LepA subfamily.

The protein resides in the cell inner membrane. The enzyme catalyses GTP + H2O = GDP + phosphate + H(+). Functionally, required for accurate and efficient protein synthesis under certain stress conditions. May act as a fidelity factor of the translation reaction, by catalyzing a one-codon backward translocation of tRNAs on improperly translocated ribosomes. Back-translocation proceeds from a post-translocation (POST) complex to a pre-translocation (PRE) complex, thus giving elongation factor G a second chance to translocate the tRNAs correctly. Binds to ribosomes in a GTP-dependent manner. This chain is Elongation factor 4, found in Verminephrobacter eiseniae (strain EF01-2).